The following is a 547-amino-acid chain: Cellodextrinase (547 aa).

Aspartate 148 functions as the Nucleophile in the catalytic mechanism. Catalysis depends on residues histidine 474, aspartate 520, and glutamate 529.

It belongs to the glycosyl hydrolase 9 (cellulase E) family.

It is found in the secreted. It catalyses the reaction Endohydrolysis of (1-&gt;4)-beta-D-glucosidic linkages in cellulose, lichenin and cereal beta-D-glucans.. With respect to regulation, is not inhibited by methylcellulose. In terms of biological role, glycoside hydrolase that rapidly hydrolyzes short-chain cellodextrins to yield either cellobiose or cellobiose and glucose as end products; cellobiose is not hydrolyzed further. Also shows limited activity against endoglucanase specific substrates (carboxymethylcellulose (CMC), lichenan, laminarin and xylan). The sequence is that of Cellodextrinase from Butyrivibrio fibrisolvens.